The chain runs to 359 residues: Membrane-bound lytic murein transglycosylase C (359 aa).

An N-terminal signal peptide occupies residues 1–16 (MKKYLALALIAPLLIS). Residue Cys17 is the site of N-palmitoyl cysteine attachment. Residue Cys17 is the site of S-diacylglycerol cysteine attachment.

The protein belongs to the transglycosylase Slt family.

The protein resides in the cell outer membrane. It carries out the reaction Exolytic cleavage of the (1-&gt;4)-beta-glycosidic linkage between N-acetylmuramic acid (MurNAc) and N-acetylglucosamine (GlcNAc) residues in peptidoglycan, from either the reducing or the non-reducing ends of the peptidoglycan chains, with concomitant formation of a 1,6-anhydrobond in the MurNAc residue.. Functionally, murein-degrading enzyme. May play a role in recycling of muropeptides during cell elongation and/or cell division. In Escherichia fergusonii (strain ATCC 35469 / DSM 13698 / CCUG 18766 / IAM 14443 / JCM 21226 / LMG 7866 / NBRC 102419 / NCTC 12128 / CDC 0568-73), this protein is Membrane-bound lytic murein transglycosylase C.